Reading from the N-terminus, the 68-residue chain is uncharacterized protein (68 aa).

This is an uncharacterized protein from Salmonella typhi.